Here is a 299-residue protein sequence, read N- to C-terminus: Probable lipid kinase YegS (299 aa).

The DAGKc domain occupies 2 to 133 (AEFPASLLIL…IDMAQVNKQT (132 aa)). Residues T40, 66–72 (GDGTINE), and T95 contribute to the ATP site. Positions 215, 218, and 220 each coordinate Mg(2+). The Proton acceptor role is filled by E271.

The protein belongs to the diacylglycerol/lipid kinase family. YegS lipid kinase subfamily. Mg(2+) is required as a cofactor. The cofactor is Ca(2+).

It localises to the cytoplasm. Its function is as follows. Probably phosphorylates lipids; the in vivo substrate is unknown. This is Probable lipid kinase YegS from Escherichia coli O17:K52:H18 (strain UMN026 / ExPEC).